Consider the following 447-residue polypeptide: Replication-associated recombination protein A (447 aa).

57 to 64 (GPPGTGKT) is a binding site for ATP.

This sequence belongs to the AAA ATPase family. RarA/MGS1/WRNIP1 subfamily.

In terms of biological role, DNA-dependent ATPase that plays important roles in cellular responses to stalled DNA replication processes. This Escherichia coli O157:H7 protein is Replication-associated recombination protein A (rarA).